Consider the following 46-residue polypeptide: MNLKTFCFFLLGIFVTLTVTVIPIANADAEADTFRGPCLKIKGYKC.

The first 20 residues, 1–20 (MNLKTFCFFLLGIFVTLTVT), serve as a signal peptide directing secretion. A propeptide spanning residues 21–33 (VIPIANADAEADT) is cleaved from the precursor.

In terms of processing, contains 1 disulfide bond. In terms of tissue distribution, expressed by the venom gland.

Its subcellular location is the secreted. In Myrmecia gulosa (Red bulldog ant), this protein is U-myrmeciitoxin(01)-Mg6a.